The sequence spans 137 residues: BolA-like protein 1 (137 aa).

S81 carries the post-translational modification Phosphoserine. The disordered stretch occupies residues 114-137 (WRENSQLDTSPPCLGGNKKTLGTP).

Belongs to the BolA/IbaG family. As to quaternary structure, interacts with GLRX5. As to expression, widely expressed.

Its subcellular location is the mitochondrion. Its function is as follows. Acts as a mitochondrial iron-sulfur (Fe-S) cluster assembly factor that facilitates (Fe-S) cluster insertion into a subset of mitochondrial proteins. Probably acts together with the monothiol glutaredoxin GLRX5. May protect cells against oxidative stress. The chain is BolA-like protein 1 from Homo sapiens (Human).